We begin with the raw amino-acid sequence, 889 residues long: A disintegrin and metalloproteinase with thrombospondin motifs 8 (889 aa).

Residues 1–26 (MLPAPAAPRWPPLLLLLLLLLPLARG) form the signal peptide. The propeptide occupies 27 to 213 (APARPAAGGQ…PLGATSRTKR (187 aa)). The disordered stretch occupies residues 138-210 (QGAGGSLAQP…PPPPLGATSR (73 aa)). Residues 173 to 183 (EGQRQERGDHQ) show a composition bias toward basic and acidic residues. Residues 184–197 (EDSEEESQEEEAEG) are compositionally biased toward acidic residues. The Peptidase M12B domain occupies 219-429 (RFVETLLVAD…GHGDCLLDAP (211 aa)). 11 cysteine pairs are disulfide-bonded: cysteine 294–cysteine 347, cysteine 323–cysteine 329, cysteine 341–cysteine 424, cysteine 379–cysteine 408, cysteine 452–cysteine 477, cysteine 463–cysteine 486, cysteine 472–cysteine 507, cysteine 501–cysteine 512, cysteine 538–cysteine 575, cysteine 542–cysteine 580, and cysteine 553–cysteine 565. Residue asparagine 344 is glycosylated (N-linked (GlcNAc...) asparagine). Histidine 363 is a binding site for Zn(2+). Glutamate 364 is a catalytic residue. The Zn(2+) site is built by histidine 367 and histidine 373. Residues asparagine 400, asparagine 465, and asparagine 490 are each glycosylated (N-linked (GlcNAc...) asparagine). In terms of domain architecture, Disintegrin spans 438 to 525 (GLPGRMALYQ…EEVERPKPVA (88 aa)). Residues 526-581 (DGGWAPWGPWGECSRTCGGGVQFSHRECKDPEPQNGGRYCLGRRAKYQSCHTEECP) enclose the TSP type-1 1 domain. A glycan (N-linked (GlcNAc...) asparagine) is linked at asparagine 599. A spacer region spans residues 690-831 (RKVSGSLTPT…RATTNIIQPL (142 aa)). The 56-residue stretch at 833-888 (HAQWVLGDWSECSSTCGAGWQRRTVECRDPSGQASATCNKALKPEDAKPCESQLCP) folds into the TSP type-1 2 domain.

It depends on Zn(2+) as a cofactor. Post-translationally, the precursor is cleaved by a furin endopeptidase. Glycosylated. Can be O-fucosylated by POFUT2 on a serine or a threonine residue found within the consensus sequence C1-X(2)-(S/T)-C2-G of the TSP type-1 repeat domains where C1 and C2 are the first and second cysteine residue of the repeat, respectively. Fucosylated repeats can then be further glycosylated by the addition of a beta-1,3-glucose residue by the glucosyltransferase, B3GALTL. Fucosylation mediates the efficient secretion of ADAMTS family members. Can also be C-glycosylated with one or two mannose molecules on tryptophan residues within the consensus sequence W-X-X-W of the TPRs, and N-glycosylated. These other glycosylations can also facilitate secretion. As to expression, highly expressed in adult and fetal lung, lower expression in brain, placenta, heart, stomach and fetal brain and kidney.

Its subcellular location is the secreted. It is found in the extracellular space. It localises to the extracellular matrix. Its function is as follows. Has anti-angiogenic properties. The sequence is that of A disintegrin and metalloproteinase with thrombospondin motifs 8 (ADAMTS8) from Homo sapiens (Human).